The sequence spans 266 residues: 22 kDa alpha-zein 4 (266 aa).

An N-terminal signal peptide occupies residues M1–A21.

It belongs to the zein family. In terms of assembly, interacts with OP10 (via N-terminus). As to expression, expressed in endosperm, mainly in the peripheral regions.

Its function is as follows. Zeins are major seed storage proteins. The chain is 22 kDa alpha-zein 4 from Zea mays (Maize).